Reading from the N-terminus, the 231-residue chain is PIAGSMVLAAILLKLGGYGIIRMMQTLPTTKTDMFIPFIVLALWGAILANLTCLQQTDLKSLIAYSSISHMGLVVATIIIQTPWGLSGAMALMIAHGFTSSALFCLANTTYERTHTRILILTRGFHNILPMTTTWWLLANLMNIAMPPTLNFTGELLIMSTLFNWCPTTIIMLGLSMLITASYSLHMFLSTQMGPTPLNSQTEPTHSREHLLMTLHLFPLMLISLKPELVI.

The next 6 helical transmembrane spans lie at 1–21, 34–54, 63–85, 89–111, 128–148, and 169–189; these read PIAG…YGII, MFIP…LTCL, IAYS…TPWG, AMAL…NTTY, ILPM…AMPP, and TIIM…HMFL.

It belongs to the complex I subunit 4 family.

Its subcellular location is the mitochondrion membrane. It catalyses the reaction a ubiquinone + NADH + 5 H(+)(in) = a ubiquinol + NAD(+) + 4 H(+)(out). Its function is as follows. Core subunit of the mitochondrial membrane respiratory chain NADH dehydrogenase (Complex I) that is believed to belong to the minimal assembly required for catalysis. Complex I functions in the transfer of electrons from NADH to the respiratory chain. The immediate electron acceptor for the enzyme is believed to be ubiquinone. This Lachesis muta muta (Bushmaster) protein is NADH-ubiquinone oxidoreductase chain 4 (MT-ND4).